Reading from the N-terminus, the 66-residue chain is Protein translocase subunit SecE (66 aa).

Residues 34-54 (LVVIVAVFVFSLICLVLDYGI) traverse the membrane as a helical segment.

The protein belongs to the SecE/SEC61-gamma family. In terms of assembly, component of the Sec protein translocase complex. Heterotrimer consisting of SecY, SecE and SecG subunits. The heterotrimers can form oligomers, although 1 heterotrimer is thought to be able to translocate proteins. Interacts with the ribosome. Interacts with SecDF, and other proteins may be involved. Interacts with SecA.

It is found in the cell inner membrane. In terms of biological role, essential subunit of the Sec protein translocation channel SecYEG. Clamps together the 2 halves of SecY. May contact the channel plug during translocation. The sequence is that of Protein translocase subunit SecE from Rickettsia bellii (strain RML369-C).